Here is a 357-residue protein sequence, read N- to C-terminus: bZIP transcription factor 23 (357 aa).

A disordered region spans residues 166–185 (PPVPPAPTPTAAAVPPPPPP). Positions 275-338 (VERRQRRMIK…KNEVLERMSR (64 aa)) constitute a bZIP domain. Positions 277-296 (RRQRRMIKNRESAARSRQRK) are basic motif. Residues 303–317 (LEAEVAKLKELNDEL) are leucine-zipper.

It belongs to the bZIP family. ABI5 subfamily. In terms of tissue distribution, highly expressed in leaves.

It localises to the nucleus. In terms of biological role, transcriptional activator that mediates abscisic acid (ABA) signaling. Can regulate the expression of a wide spectrum of stress-related genes in response to abiotic stresses through an ABA-dependent regulation pathway. Confers ABA-dependent drought and salinity tolerance. Binds specifically to the ABA-responsive elements (ABRE) in the promoter of target genes to mediate stress-responsive ABA signaling. This chain is bZIP transcription factor 23, found in Oryza sativa subsp. japonica (Rice).